The chain runs to 289 residues: Aquaporin PIP2-3 (289 aa).

The segment at 1-25 is disordered; the sequence is MAKQDIEASGPEAGEFSAKDYTDPP. 2 consecutive transmembrane segments (helical) span residues 43 to 63 and 80 to 100; these read AVIAEFIATLLFLYITVATVI and CGGVGILGIAWAFGGMIFILV. Positions 112 to 114 match the NPA 1 motif; the sequence is NPA. 3 consecutive transmembrane segments (helical) span residues 131 to 151, 173 to 193, and 207 to 227; these read LLYIIAQCLGAICGVGLVKGF, GTGLAAEIIGTFVLVYTVFSA, and VLAPLPIGFAVFMVHLATIPI. The NPA 2 motif lies at 233–235; the sequence is NPA. A helical membrane pass occupies residues 255-275; sequence IFWVGPLIGAAIAAAYHQYVL.

This sequence belongs to the MIP/aquaporin (TC 1.A.8) family. PIP (TC 1.A.8.11) subfamily.

It localises to the cell membrane. Aquaporins facilitate the transport of water and small neutral solutes across cell membranes. The sequence is that of Aquaporin PIP2-3 (PIP2-3) from Zea mays (Maize).